Consider the following 70-residue polypeptide: Protein SlyX homolog (70 aa).

It belongs to the SlyX family.

The chain is Protein SlyX homolog from Shewanella sediminis (strain HAW-EB3).